A 171-amino-acid polypeptide reads, in one-letter code: Peptide deformylase (171 aa).

Fe cation-binding residues include Cys-91 and His-133. Glu-134 is a catalytic residue. His-137 contributes to the Fe cation binding site.

It belongs to the polypeptide deformylase family. Fe(2+) is required as a cofactor.

It catalyses the reaction N-terminal N-formyl-L-methionyl-[peptide] + H2O = N-terminal L-methionyl-[peptide] + formate. Functionally, removes the formyl group from the N-terminal Met of newly synthesized proteins. Requires at least a dipeptide for an efficient rate of reaction. N-terminal L-methionine is a prerequisite for activity but the enzyme has broad specificity at other positions. This chain is Peptide deformylase, found in Edwardsiella ictaluri (strain 93-146).